A 163-amino-acid polypeptide reads, in one-letter code: SsrA-binding protein (163 aa).

Belongs to the SmpB family.

It localises to the cytoplasm. Its function is as follows. Required for rescue of stalled ribosomes mediated by trans-translation. Binds to transfer-messenger RNA (tmRNA), required for stable association of tmRNA with ribosomes. tmRNA and SmpB together mimic tRNA shape, replacing the anticodon stem-loop with SmpB. tmRNA is encoded by the ssrA gene; the 2 termini fold to resemble tRNA(Ala) and it encodes a 'tag peptide', a short internal open reading frame. During trans-translation Ala-aminoacylated tmRNA acts like a tRNA, entering the A-site of stalled ribosomes, displacing the stalled mRNA. The ribosome then switches to translate the ORF on the tmRNA; the nascent peptide is terminated with the 'tag peptide' encoded by the tmRNA and targeted for degradation. The ribosome is freed to recommence translation, which seems to be the essential function of trans-translation. This Shewanella baltica (strain OS223) protein is SsrA-binding protein.